The sequence spans 361 residues: tRNA-specific 2-thiouridylase MnmA (361 aa).

Residues 6-13 (LVSGGVDS) and Ile32 contribute to the ATP site. The segment at 93-95 (NPD) is interaction with target base in tRNA. The Nucleophile role is filled by Cys98. Cys98 and Cys193 form a disulfide bridge. ATP is bound at residue Gly121. The segment at 143-145 (KDQ) is interaction with tRNA. Cys193 functions as the Cysteine persulfide intermediate in the catalytic mechanism.

It belongs to the MnmA/TRMU family.

It is found in the cytoplasm. The catalysed reaction is S-sulfanyl-L-cysteinyl-[protein] + uridine(34) in tRNA + AH2 + ATP = 2-thiouridine(34) in tRNA + L-cysteinyl-[protein] + A + AMP + diphosphate + H(+). Catalyzes the 2-thiolation of uridine at the wobble position (U34) of tRNA, leading to the formation of s(2)U34. The chain is tRNA-specific 2-thiouridylase MnmA from Porphyromonas gingivalis (strain ATCC 33277 / DSM 20709 / CIP 103683 / JCM 12257 / NCTC 11834 / 2561).